The primary structure comprises 312 residues: Ribosomal RNA small subunit methyltransferase H (312 aa).

S-adenosyl-L-methionine is bound by residues 35–37, Asp55, Phe80, Asp102, and Gln109; that span reads GGH.

The protein belongs to the methyltransferase superfamily. RsmH family.

It is found in the cytoplasm. The enzyme catalyses cytidine(1402) in 16S rRNA + S-adenosyl-L-methionine = N(4)-methylcytidine(1402) in 16S rRNA + S-adenosyl-L-homocysteine + H(+). Functionally, specifically methylates the N4 position of cytidine in position 1402 (C1402) of 16S rRNA. The protein is Ribosomal RNA small subunit methyltransferase H of Pseudoalteromonas translucida (strain TAC 125).